Reading from the N-terminus, the 77-residue chain is Small ribosomal subunit protein bS21 (77 aa).

It belongs to the bacterial ribosomal protein bS21 family.

In Bartonella tribocorum (strain CIP 105476 / IBS 506), this protein is Small ribosomal subunit protein bS21.